We begin with the raw amino-acid sequence, 784 residues long: ent-copalyl diphosphate synthase 2, chloroplastic (784 aa).

The N-terminal 57 residues, 1-57 (MSMTLFASVTRPGLPGPTALRFPETRHLFHSVTAFAASFSPSKSSVGSSQCNATTPP), are a transit peptide targeting the chloroplast. A substrate-binding site is contributed by Lys242. Positions 379 and 381 each coordinate Mg(2+). Positions 379–382 (DIDD) match the DXDD motif motif. Substrate is bound at residue Lys466.

Belongs to the terpene synthase family. It depends on Mg(2+) as a cofactor. In terms of tissue distribution, present in both leaves and flowers.

It is found in the plastid. The protein localises to the chloroplast. It participates in plant hormone biosynthesis; gibberellin biosynthesis. Its pathway is secondary metabolite biosynthesis; terpenoid biosynthesis. Involved in the biosynthesis of labdane-type diterpenoid including marrubiin and other labdane-related furanoid diterpenoids with potential applications as anti-diabetics, analgesics or vasorelaxants. May be involved in the conversion of geranylgeranyl diphosphate (GGPP) to ent-copalyl diphosphate (ent-CPP) and 8-hydroxycopalyl diphosphate (LPP, labda-13-en-8-ol diphosphate). In Marrubium vulgare (White horehound), this protein is ent-copalyl diphosphate synthase 2, chloroplastic.